We begin with the raw amino-acid sequence, 180 residues long: Adenine phosphoribosyltransferase (180 aa).

This sequence belongs to the purine/pyrimidine phosphoribosyltransferase family. In terms of assembly, homodimer.

The protein resides in the cytoplasm. It catalyses the reaction AMP + diphosphate = 5-phospho-alpha-D-ribose 1-diphosphate + adenine. The protein operates within purine metabolism; AMP biosynthesis via salvage pathway; AMP from adenine: step 1/1. Its function is as follows. Catalyzes a salvage reaction resulting in the formation of AMP, that is energically less costly than de novo synthesis. This chain is Adenine phosphoribosyltransferase, found in Marinobacter nauticus (strain ATCC 700491 / DSM 11845 / VT8) (Marinobacter aquaeolei).